Consider the following 247-residue polypeptide: tRNA pseudouridine synthase A (247 aa).

Residue Asp52 is the Nucleophile of the active site. A substrate-binding site is contributed by Tyr111.

It belongs to the tRNA pseudouridine synthase TruA family. In terms of assembly, homodimer.

The enzyme catalyses uridine(38/39/40) in tRNA = pseudouridine(38/39/40) in tRNA. In terms of biological role, formation of pseudouridine at positions 38, 39 and 40 in the anticodon stem and loop of transfer RNAs. In Caulobacter vibrioides (strain ATCC 19089 / CIP 103742 / CB 15) (Caulobacter crescentus), this protein is tRNA pseudouridine synthase A.